Here is a 398-residue protein sequence, read N- to C-terminus: Acetate kinase (398 aa).

N8 is a Mg(2+) binding site. K15 is an ATP binding site. R89 contributes to the substrate binding site. Residue D146 is the Proton donor/acceptor of the active site. ATP contacts are provided by residues 206–210, 281–283, and 329–333; these read HIGNG, DLR, and GVGEN. E383 lines the Mg(2+) pocket.

It belongs to the acetokinase family. As to quaternary structure, homodimer. Requires Mg(2+) as cofactor. Mn(2+) serves as cofactor.

The protein localises to the cytoplasm. The catalysed reaction is acetate + ATP = acetyl phosphate + ADP. The protein operates within metabolic intermediate biosynthesis; acetyl-CoA biosynthesis; acetyl-CoA from acetate: step 1/2. Catalyzes the formation of acetyl phosphate from acetate and ATP. Can also catalyze the reverse reaction. This Macrococcus caseolyticus (strain JCSC5402) (Macrococcoides caseolyticum) protein is Acetate kinase.